Reading from the N-terminus, the 721-residue chain is Polyribonucleotide nucleotidyltransferase (721 aa).

Mg(2+) is bound by residues Asp495 and Asp501. In terms of domain architecture, KH spans 562–621 (PRLLSFRIDPELIGTVIGPGGRTIKGITERTNTKIDIEDGGIVTIASHDGAAAEEAQKII). Residues 631 to 699 (GEVFSGSITR…NRGRINLTLR (69 aa)) enclose the S1 motif domain.

Belongs to the polyribonucleotide nucleotidyltransferase family. The cofactor is Mg(2+).

It is found in the cytoplasm. The enzyme catalyses RNA(n+1) + phosphate = RNA(n) + a ribonucleoside 5'-diphosphate. Its function is as follows. Involved in mRNA degradation. Catalyzes the phosphorolysis of single-stranded polyribonucleotides processively in the 3'- to 5'-direction. This Synechococcus sp. (strain CC9605) protein is Polyribonucleotide nucleotidyltransferase.